Consider the following 191-residue polypeptide: Fe/S biogenesis protein NfuA (191 aa).

Cys149 and Cys152 together coordinate [4Fe-4S] cluster.

It belongs to the NfuA family. In terms of assembly, homodimer. Requires [4Fe-4S] cluster as cofactor.

Involved in iron-sulfur cluster biogenesis. Binds a 4Fe-4S cluster, can transfer this cluster to apoproteins, and thereby intervenes in the maturation of Fe/S proteins. Could also act as a scaffold/chaperone for damaged Fe/S proteins. In Salmonella arizonae (strain ATCC BAA-731 / CDC346-86 / RSK2980), this protein is Fe/S biogenesis protein NfuA.